The primary structure comprises 363 residues: Chorismate synthase (363 aa).

Positions 48 and 54 each coordinate NADP(+). FMN is bound by residues 125–127 (RSS), 237–238 (NA), Gly277, 292–296 (KPTSS), and Arg318.

Belongs to the chorismate synthase family. Homotetramer. FMNH2 serves as cofactor.

The enzyme catalyses 5-O-(1-carboxyvinyl)-3-phosphoshikimate = chorismate + phosphate. Its pathway is metabolic intermediate biosynthesis; chorismate biosynthesis; chorismate from D-erythrose 4-phosphate and phosphoenolpyruvate: step 7/7. Functionally, catalyzes the anti-1,4-elimination of the C-3 phosphate and the C-6 proR hydrogen from 5-enolpyruvylshikimate-3-phosphate (EPSP) to yield chorismate, which is the branch point compound that serves as the starting substrate for the three terminal pathways of aromatic amino acid biosynthesis. This reaction introduces a second double bond into the aromatic ring system. The sequence is that of Chorismate synthase from Pseudomonas savastanoi pv. phaseolicola (strain 1448A / Race 6) (Pseudomonas syringae pv. phaseolicola (strain 1448A / Race 6)).